We begin with the raw amino-acid sequence, 267 residues long: L-aspartate dehydrogenase (267 aa).

The NAD(+) site is built by A124 and N190. Residue H218 is part of the active site.

This sequence belongs to the L-aspartate dehydrogenase family.

The catalysed reaction is L-aspartate + NADP(+) + H2O = oxaloacetate + NH4(+) + NADPH + H(+). It catalyses the reaction L-aspartate + NAD(+) + H2O = oxaloacetate + NH4(+) + NADH + H(+). The protein operates within cofactor biosynthesis; NAD(+) biosynthesis; iminoaspartate from L-aspartate (dehydrogenase route): step 1/1. Functionally, specifically catalyzes the NAD or NADP-dependent dehydrogenation of L-aspartate to iminoaspartate. The protein is L-aspartate dehydrogenase of Methanococcus maripaludis (strain C5 / ATCC BAA-1333).